The sequence spans 899 residues: Probable disease resistance protein RXW24L (899 aa).

Residues 13 to 50 (DRLSQEYDQFKGVEDQVTELKSNLNLLKSFLKDADAKK) are a coiled coil. The NB-ARC domain occupies 143-455 (LQERQREMRH…AEGISERRRY (313 aa)). 189–196 (GMGGLGKT) provides a ligand contact to ATP.

The protein belongs to the disease resistance NB-LRR family.

In terms of biological role, potential disease resistance protein. This chain is Probable disease resistance protein RXW24L (RXW24L), found in Arabidopsis thaliana (Mouse-ear cress).